A 183-amino-acid polypeptide reads, in one-letter code: ADP-ribosylation factor-like protein 1 (183 aa).

Glycine 2 carries N-myristoyl glycine lipidation. GTP is bound by residues 25 to 32, 68 to 72, and 127 to 130; these read GLDGAGKT, DLGGQ, and NKQD.

The protein belongs to the small GTPase superfamily. Arf family. In terms of assembly, homodimer. Interacts with IMH1 (via GRIP domain); the interaction is dependent on GTP. Interacts with MON2.

The protein localises to the golgi apparatus. Its function is as follows. Recruits golgins such as IMH1 to the Golgi. Can bind and hydrolyze GTP. May be involved in trafficking events within the endosomal system. This chain is ADP-ribosylation factor-like protein 1 (ARL1), found in Saccharomyces cerevisiae (strain ATCC 204508 / S288c) (Baker's yeast).